The primary structure comprises 55 residues: Large ribosomal subunit protein bL33 (55 aa).

Belongs to the bacterial ribosomal protein bL33 family.

The polypeptide is Large ribosomal subunit protein bL33 (Polaromonas sp. (strain JS666 / ATCC BAA-500)).